The primary structure comprises 544 residues: Phosphomannomutase (544 aa).

Ser-145 acts as the Phosphoserine intermediate in catalysis. Residues Ser-145, Asp-297, Asp-299, and Asp-301 each coordinate Mg(2+).

This sequence belongs to the phosphohexose mutase family. Mg(2+) serves as cofactor.

The enzyme catalyses alpha-D-mannose 1-phosphate = D-mannose 6-phosphate. The chain is Phosphomannomutase (manB) from Mycoplasmoides pirum (Mycoplasma pirum).